Consider the following 631-residue polypeptide: PTS system beta-glucoside-specific EIIBCA component (631 aa).

The region spanning 1–86 is the PTS EIIB type-1 domain; the sequence is MNYETLASEI…LSLDGMARFS (86 aa). The active-site Phosphocysteine intermediate; for EIIB activity is Cys-26. In terms of domain architecture, PTS EIIC type-1 spans 105-466; that stretch reads DIISSIFTPF…DETQPAAADS (362 aa). 10 consecutive transmembrane segments (helical) span residues 120–140, 146–166, 175–195, 206–226, 248–268, 295–315, 328–348, 358–378, 385–405, and 434–454; these read ATGILKGFLALGVATHVISES, LLFAASDALFYFFPIVLGYTA, FTTLVIGATLVHPSMIAAFNA, FLGIPITFINYSSSVIPILFA, FFTPLLCIVISVPLTFLLIGP, VMGALWQVCVIFGLHWGFVPL, LLPLLVPAVLGQAGATLGVLL, IAGSAFSAAIFGITEPAVYGV, PFIFGCIGGALGAAVMGYAHT, and AVIGTLLAFAFAALTSWSFGV. The PTS EIIA type-1 domain occupies 501 to 605; that stretch reads DRTFASGVMG…DLTTPIVITN (105 aa). His-553 acts as the Tele-phosphohistidine intermediate; for EIIA activity in catalysis.

It is found in the cell inner membrane. In terms of biological role, the phosphoenolpyruvate-dependent sugar phosphotransferase system (sugar PTS), a major carbohydrate active -transport system, catalyzes the phosphorylation of incoming sugar substrates concomitantly with their translocation across the cell membrane. This system is involved in beta-glucoside transport. Acts both as a kinase and as a phosphatase on ArbG. The chain is PTS system beta-glucoside-specific EIIBCA component (arbF) from Dickeya chrysanthemi (Pectobacterium chrysanthemi).